A 680-amino-acid polypeptide reads, in one-letter code: DNA ligase (680 aa).

Residues 44 to 48 (DHVYD), 93 to 94 (SM), and Glu125 each bind NAD(+). Residue Lys127 is the N6-AMP-lysine intermediate of the active site. Residues Arg148, Glu182, Lys298, and Lys322 each coordinate NAD(+). 4 residues coordinate Zn(2+): Cys416, Cys419, Cys434, and Cys439. Positions 600–680 (NPDSEWNGRR…QFSQAMKEEQ (81 aa)) constitute a BRCT domain.

It belongs to the NAD-dependent DNA ligase family. LigA subfamily. It depends on Mg(2+) as a cofactor. Mn(2+) serves as cofactor.

It catalyses the reaction NAD(+) + (deoxyribonucleotide)n-3'-hydroxyl + 5'-phospho-(deoxyribonucleotide)m = (deoxyribonucleotide)n+m + AMP + beta-nicotinamide D-nucleotide.. In terms of biological role, DNA ligase that catalyzes the formation of phosphodiester linkages between 5'-phosphoryl and 3'-hydroxyl groups in double-stranded DNA using NAD as a coenzyme and as the energy source for the reaction. It is essential for DNA replication and repair of damaged DNA. The chain is DNA ligase from Limosilactobacillus reuteri (strain DSM 20016) (Lactobacillus reuteri).